We begin with the raw amino-acid sequence, 576 residues long: Sulfite reductase [NADPH] hemoprotein beta-component (576 aa).

[4Fe-4S] cluster is bound by residues cysteine 434, cysteine 440, cysteine 479, and cysteine 483. Cysteine 483 lines the siroheme pocket.

This sequence belongs to the nitrite and sulfite reductase 4Fe-4S domain family. As to quaternary structure, alpha(8)-beta(8). The alpha component is a flavoprotein, the beta component is a hemoprotein. Requires siroheme as cofactor. [4Fe-4S] cluster is required as a cofactor.

The enzyme catalyses hydrogen sulfide + 3 NADP(+) + 3 H2O = sulfite + 3 NADPH + 4 H(+). The protein operates within sulfur metabolism; hydrogen sulfide biosynthesis; hydrogen sulfide from sulfite (NADPH route): step 1/1. Its function is as follows. Component of the sulfite reductase complex that catalyzes the 6-electron reduction of sulfite to sulfide. This is one of several activities required for the biosynthesis of L-cysteine from sulfate. This chain is Sulfite reductase [NADPH] hemoprotein beta-component, found in Oceanobacillus iheyensis (strain DSM 14371 / CIP 107618 / JCM 11309 / KCTC 3954 / HTE831).